The following is a 209-amino-acid chain: Uracil phosphoribosyltransferase (209 aa).

5-phospho-alpha-D-ribose 1-diphosphate-binding positions include R79, R104, and 131-139 (DPMLATGGS). Residues I194 and 199–201 (GDA) each bind uracil. Residue D200 coordinates 5-phospho-alpha-D-ribose 1-diphosphate.

It belongs to the UPRTase family. It depends on Mg(2+) as a cofactor.

It carries out the reaction UMP + diphosphate = 5-phospho-alpha-D-ribose 1-diphosphate + uracil. It participates in pyrimidine metabolism; UMP biosynthesis via salvage pathway; UMP from uracil: step 1/1. Allosterically activated by GTP. Its function is as follows. Catalyzes the conversion of uracil and 5-phospho-alpha-D-ribose 1-diphosphate (PRPP) to UMP and diphosphate. The chain is Uracil phosphoribosyltransferase from Anoxybacillus flavithermus (strain DSM 21510 / WK1).